Consider the following 234-residue polypeptide: Ion-translocating oxidoreductase complex subunit E (234 aa).

5 helical membrane-spanning segments follow: residues 62–82 (LGLG…ISLF), 92–112 (IPIY…LMNA), 116–136 (TLYQ…IIIG), 151–171 (IWDG…LGAL), and 205–225 (SFLL…LLAI).

This sequence belongs to the NqrDE/RnfAE family. The complex is composed of six subunits: RnfA, RnfB, RnfC, RnfD, RnfE and RnfG.

It localises to the cell inner membrane. In terms of biological role, part of a membrane-bound complex that couples electron transfer with translocation of ions across the membrane. The sequence is that of Ion-translocating oxidoreductase complex subunit E from Haemophilus influenzae (strain PittGG).